The chain runs to 255 residues: 1-(5-phosphoribosyl)-5-[(5-phosphoribosylamino)methylideneamino] imidazole-4-carboxamide isomerase (255 aa).

Asp-8 functions as the Proton acceptor in the catalytic mechanism. Asp-129 (proton donor) is an active-site residue.

Belongs to the HisA/HisF family.

It localises to the cytoplasm. It carries out the reaction 1-(5-phospho-beta-D-ribosyl)-5-[(5-phospho-beta-D-ribosylamino)methylideneamino]imidazole-4-carboxamide = 5-[(5-phospho-1-deoxy-D-ribulos-1-ylimino)methylamino]-1-(5-phospho-beta-D-ribosyl)imidazole-4-carboxamide. Its pathway is amino-acid biosynthesis; L-histidine biosynthesis; L-histidine from 5-phospho-alpha-D-ribose 1-diphosphate: step 4/9. The polypeptide is 1-(5-phosphoribosyl)-5-[(5-phosphoribosylamino)methylideneamino] imidazole-4-carboxamide isomerase (Prochlorococcus marinus (strain MIT 9312)).